Here is a 391-residue protein sequence, read N- to C-terminus: MDDKKNEDVEMRNFNGRSSPSQRDPFISKPGAAKRGGSSFDLSNVTNSPGISILAYCLASISMTVTNKYCVSGSNWNLNFFYLAIQSVVCIIAIIICKQAGLITNLAPFDTKKAKTWFPISLLLVGMIYTSTKALQFLSVPVYTIFKNLTIIVIAYGEVLWFGGSVTPSALFSFGLMVLSSVVAAWADIQHALYGGGATQTKEAADALSTLNAGYAWMGMNVFCTAAYVLSMRKVIKKMNFKDWDTMFYNNLLTIPVLFVCSFVFENWSSENLTKNFPLETRNNLILGMIYSGLATIFISYCSAWCIRVTSSTTYSMVGALNKLPIAVSGLVFFAAPVTFGSVSAIFIGFVSGIVYAWAKVRQNQSKGSVLPTTQPVMSASSQSNRDAAKA.

Residues 1 to 11 (MDDKKNEDVEM) are compositionally biased toward basic and acidic residues. A disordered region spans residues 1–28 (MDDKKNEDVEMRNFNGRSSPSQRDPFIS). Residues 1 to 44 (MDDKKNEDVEMRNFNGRSSPSQRDPFISKPGAAKRGGSSFDLSN) lie on the Cytoplasmic side of the membrane. Residues 45 to 65 (VTNSPGISILAYCLASISMTV) form a helical membrane-spanning segment. Over 66–75 (TNKYCVSGSN) the chain is Lumenal. Residues 76–96 (WNLNFFYLAIQSVVCIIAIII) form a helical membrane-spanning segment. The Cytoplasmic segment spans residues 97–115 (CKQAGLITNLAPFDTKKAK). Residues 116-138 (TWFPISLLLVGMIYTSTKALQFL) form a helical membrane-spanning segment. At 139 to 141 (SVP) the chain is on the lumenal side. Residues 142 to 164 (VYTIFKNLTIIVIAYGEVLWFGG) form a helical membrane-spanning segment. The Cytoplasmic segment spans residues 165–170 (SVTPSA). A helical transmembrane segment spans residues 171–193 (LFSFGLMVLSSVVAAWADIQHAL). The Lumenal segment spans residues 194 to 209 (YGGGATQTKEAADALS). The helical transmembrane segment at 210–230 (TLNAGYAWMGMNVFCTAAYVL) threads the bilayer. Residues 231 to 245 (SMRKVIKKMNFKDWD) lie on the Cytoplasmic side of the membrane. The chain crosses the membrane as a helical span at residues 246–266 (TMFYNNLLTIPVLFVCSFVFE). 2 N-linked (GlcNAc...) asparagine glycosylation sites follow: N267 and N272. Over 267–284 (NWSSENLTKNFPLETRNN) the chain is Lumenal. Residues 285–305 (LILGMIYSGLATIFISYCSAW) form a helical membrane-spanning segment. At 306–313 (CIRVTSST) the chain is on the cytoplasmic side. Residues 314–336 (TYSMVGALNKLPIAVSGLVFFAA) traverse the membrane as a helical segment. The Lumenal segment spans residues 337–339 (PVT). The helical transmembrane segment at 340-359 (FGSVSAIFIGFVSGIVYAWA) threads the bilayer. Residues 360–391 (KVRQNQSKGSVLPTTQPVMSASSQSNRDAAKA) lie on the Cytoplasmic side of the membrane. Residues 369–391 (SVLPTTQPVMSASSQSNRDAAKA) form a disordered region.

This sequence belongs to the TPT transporter family. SLC35D subfamily. Homooligomer.

The protein resides in the golgi apparatus membrane. It is found in the cytoplasmic vesicle membrane. It localises to the endoplasmic reticulum membrane. In terms of biological role, involved in the import of GDP-mannose from the cytoplasm into the Golgi lumen. This chain is GDP-mannose transporter (vrg4), found in Sclerotinia sclerotiorum (strain ATCC 18683 / 1980 / Ss-1) (White mold).